The primary structure comprises 182 residues: Adenine phosphoribosyltransferase (182 aa).

The protein belongs to the purine/pyrimidine phosphoribosyltransferase family. In terms of assembly, homodimer.

Its subcellular location is the cytoplasm. It catalyses the reaction AMP + diphosphate = 5-phospho-alpha-D-ribose 1-diphosphate + adenine. Its pathway is purine metabolism; AMP biosynthesis via salvage pathway; AMP from adenine: step 1/1. Catalyzes a salvage reaction resulting in the formation of AMP, that is energically less costly than de novo synthesis. This chain is Adenine phosphoribosyltransferase, found in Bordetella pertussis (strain Tohama I / ATCC BAA-589 / NCTC 13251).